We begin with the raw amino-acid sequence, 63 residues long: Keratin-associated protein 8-1 (63 aa).

The segment at 12–54 is 12 X 2 AA repeats of G-[YCGS]; the sequence is PGCYWGSYGYPLGYSVGCGYGSTYSPVGYGFGYGYNGCGAFGY.

Belongs to the KRTAP type 8 family. Interacts with hair keratins. As to expression, is essentially restricted to only one vertical half of the hair forming compartment and in beard hairs is absent from the central medulla.

Functionally, in the hair cortex, hair keratin intermediate filaments are embedded in an interfilamentous matrix, consisting of hair keratin-associated proteins (KRTAP), which are essential for the formation of a rigid and resistant hair shaft through their extensive disulfide bond cross-linking with abundant cysteine residues of hair keratins. The matrix proteins include the high-sulfur and high-glycine-tyrosine keratins. The chain is Keratin-associated protein 8-1 (KRTAP8-1) from Homo sapiens (Human).